The chain runs to 470 residues: Glutamate--tRNA ligase (470 aa).

The short motif at 9–19 (PSPTGFLHVGG) is the 'HIGH' region element. The 'KMSKS' region signature appears at 236-240 (RLSKR). Residue Lys-239 coordinates ATP.

It belongs to the class-I aminoacyl-tRNA synthetase family. Glutamate--tRNA ligase type 1 subfamily. Monomer.

Its subcellular location is the cytoplasm. It catalyses the reaction tRNA(Glu) + L-glutamate + ATP = L-glutamyl-tRNA(Glu) + AMP + diphosphate. Functionally, catalyzes the attachment of glutamate to tRNA(Glu) in a two-step reaction: glutamate is first activated by ATP to form Glu-AMP and then transferred to the acceptor end of tRNA(Glu). The sequence is that of Glutamate--tRNA ligase from Legionella pneumophila (strain Corby).